The primary structure comprises 517 residues: GMP synthase [glutamine-hydrolyzing] (517 aa).

The region spanning 9–199 (RILILDFGSQ…VLGVCGCERL (191 aa)) is the Glutamine amidotransferase type-1 domain. Cys-86 acts as the Nucleophile in catalysis. Active-site residues include His-173 and Glu-175. In terms of domain architecture, GMPS ATP-PPase spans 200-392 (WTSESIIEDA…LGLPYNMLYR (193 aa)). 227–233 (SGGVDSS) contributes to the ATP binding site.

Homodimer.

The enzyme catalyses XMP + L-glutamine + ATP + H2O = GMP + L-glutamate + AMP + diphosphate + 2 H(+). The protein operates within purine metabolism; GMP biosynthesis; GMP from XMP (L-Gln route): step 1/1. Catalyzes the synthesis of GMP from XMP. This chain is GMP synthase [glutamine-hydrolyzing], found in Vibrio campbellii (strain ATCC BAA-1116).